Reading from the N-terminus, the 195-residue chain is MKNNEKVSDSFLTSSGKELSEATPSASSYTTVVRDKNIKGVVSNWLAEMKLRHKPLGFDYQGVEILEVKPEDLTSVAIALYAYGFNYLRNQCAYDVSPGGNLASVYHLTKLDADVDQPQEVCLKVFLPRENPRVPSVFWIWKTADFQERESYDMFGIYYEGHPHLKRILMPENWVGWPLRKDYITPDFFELQDAY.

This sequence belongs to the complex I 30 kDa subunit family. In terms of assembly, NDH is composed of at least 16 different subunits, 5 of which are encoded in the nucleus.

It localises to the plastid. The protein localises to the chloroplast thylakoid membrane. The enzyme catalyses a plastoquinone + NADH + (n+1) H(+)(in) = a plastoquinol + NAD(+) + n H(+)(out). It carries out the reaction a plastoquinone + NADPH + (n+1) H(+)(in) = a plastoquinol + NADP(+) + n H(+)(out). In terms of biological role, NDH shuttles electrons from NAD(P)H:plastoquinone, via FMN and iron-sulfur (Fe-S) centers, to quinones in the photosynthetic chain and possibly in a chloroplast respiratory chain. The immediate electron acceptor for the enzyme in this species is believed to be plastoquinone. Couples the redox reaction to proton translocation, and thus conserves the redox energy in a proton gradient. The polypeptide is NAD(P)H-quinone oxidoreductase subunit J, chloroplastic (Chlorokybus atmophyticus (Soil alga)).